Here is a 354-residue protein sequence, read N- to C-terminus: Serum paraoxonase/arylesterase 2 (354 aa).

Cys-42 and Cys-352 are disulfide-bonded. Glu-53 and Asp-54 together coordinate Ca(2+). His-114 serves as the catalytic Proton acceptor. The Ca(2+) site is built by Ile-116, Asn-167, Asp-168, and Asn-223. N-linked (GlcNAc...) asparagine glycosylation is present at Asn-254. Ca(2+) contacts are provided by Asp-268 and Asn-269. Asn-269 and Asn-323 each carry an N-linked (GlcNAc...) asparagine glycan.

Belongs to the paraoxonase family. In terms of assembly, homotrimer. Ca(2+) serves as cofactor. Glycosylated. In terms of processing, the signal sequence is not cleaved.

It is found in the membrane. The enzyme catalyses a phenyl acetate + H2O = a phenol + acetate + H(+). It catalyses the reaction an N-acyl-L-homoserine lactone + H2O = an N-acyl-L-homoserine + H(+). Capable of hydrolyzing lactones and a number of aromatic carboxylic acid esters. This is Serum paraoxonase/arylesterase 2 (PON2) from Bos taurus (Bovine).